The sequence spans 225 residues: Putative membrane protease YugP (225 aa).

H95 contacts Zn(2+). E96 is a catalytic residue. The Zn(2+) site is built by H99 and H103. The next 3 helical transmembrane spans lie at 116 to 138 (IFPVVNFASGVAPLLFLGGMLLG), 140 to 162 (LNLIGLGIILFSAAVFFQLITLP), and 192 to 212 (VLSAAALTYVAAALVSLFELL).

The protein resides in the cell membrane. This chain is Putative membrane protease YugP (yugP), found in Bacillus subtilis (strain 168).